A 432-amino-acid polypeptide reads, in one-letter code: MQVTVETKEGLERVLTITVPAANIEDAVSAELRNIAKNRRFDGFRKGKVPMKMVAKMYGQAVRNDVMGEVMQRHFIEAIVKEKINPAGAPTFTPVEFAEGKDLVFSASFEVYPEVALQGLDKVVVEKPQVEVKDEDVAEMLETLRKQQSTWADADIAAEDGTRATINFVGSIDGEEFEGGKAENFPLEMGQGRMIPGFEDGIKGKKAGDELTIDVNFPEEYHAENLKGKAAQFAIKVVKVEARELPELNDEFVAKFGAEGGVEGLKAEVRKNMERELAQAVKNKIKEQAINGLVEQNNIDVPSALIDQEVQVLRQQAVQRFGGNADTAPELPRELFEEQAKRRVVVGLLLGEVIKSEELKADDEKVKALINEMASAYEDPTEVVAYYEGNEQMMNNMRNVALEEQAVEAILAKAQVSEKAFGFNELMNQQPA.

One can recognise a PPIase FKBP-type domain in the interval 161–246 (GTRATINFVG…VVKVEARELP (86 aa)).

Belongs to the FKBP-type PPIase family. Tig subfamily.

It is found in the cytoplasm. It carries out the reaction [protein]-peptidylproline (omega=180) = [protein]-peptidylproline (omega=0). Involved in protein export. Acts as a chaperone by maintaining the newly synthesized protein in an open conformation. Functions as a peptidyl-prolyl cis-trans isomerase. The protein is Trigger factor of Aliivibrio fischeri (strain MJ11) (Vibrio fischeri).